The primary structure comprises 412 residues: uncharacterized protein (412 aa).

The UmuC domain maps to 20–199 (FFYFDFDAFF…LPIVELPGIG (180 aa)).

Belongs to the DNA polymerase type-Y family.

This is an uncharacterized protein from Mycoplasma pneumoniae (strain ATCC 29342 / M129 / Subtype 1) (Mycoplasmoides pneumoniae).